The sequence spans 636 residues: Epsin-3 (636 aa).

6 residues coordinate a 1,2-diacyl-sn-glycero-3-phospho-(1D-myo-inositol-4,5-bisphosphate): Arg-8, Lys-11, Arg-25, Asn-30, Arg-63, and His-73. An ENTH domain is found at 12 to 144; that stretch reads NIVHNYSEAE…KDEERLRQER (133 aa). The disordered stretch occupies residues 153 to 503; sequence RMALEGMGIG…TPESFLGPSA (351 aa). Residues 174-189 show a composition bias toward low complexity; that stretch reads GSPSSYTSASSSPRYA. Residues Ser-184 and Ser-185 each carry the phosphoserine modification. UIM domains are found at residues 202 to 221 and 229 to 248; these read EEEL…AERP and DEDL…HEKG. Composition is skewed to basic and acidic residues over residues 214–231 and 242–256; these read SREE…RDED and RQEH…KGDD. Ser-257 bears the Phosphoserine mark. Positions 270 to 288 are enriched in basic and acidic residues; the sequence is RQRDREPEREERKEEEKLK. A run of 5 repeats spans residues 315–317, 338–340, 365–367, 381–383, and 398–400. The tract at residues 315 to 400 is 5 X 3 AA repeats of [DE]-P-W; that stretch reads DPWDIPGLRP…KLPSTGADPW (86 aa). Residues 426 to 435 show a composition bias toward basic and acidic residues; that stretch reads ESTEPKESRD. Repeat copies occupy residues 523–525 and 536–538. Residues 523-635 are 3 X 3 AA repeats of N-P-F; the sequence is NPFLTGLGVP…LPPQAGTNPF (113 aa). Positions 607-616 are enriched in pro residues; it reads PPPASLPQPL. The interval 607 to 636 is disordered; that stretch reads PPPASLPQPLLPTSGPMGPLPPQAGTNPFL. Copy 3 of the repeat occupies 633 to 635; the sequence is NPF.

It belongs to the epsin family.

The protein localises to the cytoplasm. It is found in the cell cortex. It localises to the perinuclear region. The protein resides in the cytoplasmic vesicle. Its subcellular location is the clathrin-coated vesicle. The chain is Epsin-3 (Epn3) from Mus musculus (Mouse).